The chain runs to 468 residues: 3-isopropylmalate dehydratase large subunit (468 aa).

The [4Fe-4S] cluster site is built by Cys349, Cys409, and Cys412.

Belongs to the aconitase/IPM isomerase family. LeuC type 1 subfamily. Heterodimer of LeuC and LeuD. Requires [4Fe-4S] cluster as cofactor.

It carries out the reaction (2R,3S)-3-isopropylmalate = (2S)-2-isopropylmalate. It functions in the pathway amino-acid biosynthesis; L-leucine biosynthesis; L-leucine from 3-methyl-2-oxobutanoate: step 2/4. Its function is as follows. Catalyzes the isomerization between 2-isopropylmalate and 3-isopropylmalate, via the formation of 2-isopropylmaleate. This chain is 3-isopropylmalate dehydratase large subunit, found in Nitrobacter winogradskyi (strain ATCC 25391 / DSM 10237 / CIP 104748 / NCIMB 11846 / Nb-255).